Reading from the N-terminus, the 546-residue chain is CTP synthase (546 aa).

Residues 1-269 (MNSNTKIIFV…DAKLVELLNL (269 aa)) are amidoligase domain. Serine 16 serves as a coordination point for CTP. Serine 16 is a binding site for UTP. ATP contacts are provided by residues 17-22 (SLGKGV) and aspartate 74. Mg(2+) contacts are provided by aspartate 74 and glutamate 143. CTP contacts are provided by residues 150–152 (DIE), 190–195 (KTKPTQ), and lysine 226. Residues 190–195 (KTKPTQ) and lysine 226 each bind UTP. Residues 294 to 546 (TIAMVGKYVS…IQAAIENSNN (253 aa)) form the Glutamine amidotransferase type-1 domain. Glycine 356 contributes to the L-glutamine binding site. Cysteine 383 (nucleophile; for glutamine hydrolysis) is an active-site residue. L-glutamine is bound by residues 384–387 (LGMQ), glutamate 407, and arginine 474. Catalysis depends on residues histidine 519 and glutamate 521.

It belongs to the CTP synthase family. Homotetramer.

The enzyme catalyses UTP + L-glutamine + ATP + H2O = CTP + L-glutamate + ADP + phosphate + 2 H(+). The catalysed reaction is L-glutamine + H2O = L-glutamate + NH4(+). It catalyses the reaction UTP + NH4(+) + ATP = CTP + ADP + phosphate + 2 H(+). It participates in pyrimidine metabolism; CTP biosynthesis via de novo pathway; CTP from UDP: step 2/2. With respect to regulation, allosterically activated by GTP, when glutamine is the substrate; GTP has no effect on the reaction when ammonia is the substrate. The allosteric effector GTP functions by stabilizing the protein conformation that binds the tetrahedral intermediate(s) formed during glutamine hydrolysis. Inhibited by the product CTP, via allosteric rather than competitive inhibition. In terms of biological role, catalyzes the ATP-dependent amination of UTP to CTP with either L-glutamine or ammonia as the source of nitrogen. Regulates intracellular CTP levels through interactions with the four ribonucleotide triphosphates. This chain is CTP synthase, found in Francisella tularensis subsp. mediasiatica (strain FSC147).